The chain runs to 223 residues: MATPQSIFIFAICILMITELILASKSYYDILGVPKSASERQIKKAFHKLAMKYHPDKNKSPDAEAKFREIAEAYETLSDANRRKEYDTLGHSAFTNGKGQRGSGSSFEQSFNFNFDDLFKDFGFFGQNQNTRSKKHFENHFQTRPDGGSSRQRHHFQEFSFGGGLFDDMFEDMEKMFSFSGFDPTSRHTVQTENRFHGSSKHCRTVTQRRGNMVTTYTDCSGQ.

The first 23 residues, 1–23 (MATPQSIFIFAICILMITELILA), serve as a signal peptide directing secretion. One can recognise a J domain in the interval 26 to 90 (SYYDILGVPK…NRRKEYDTLG (65 aa)). Positions 91 to 223 (HSAFTNGKGQ…VTTYTDCSGQ (133 aa)) are divergent targeting domain. S133 carries the post-translational modification Phosphoserine.

Interacts with HSPA5/BiP; interaction is direct. Interacts with ERN1/IRE1 (via the luminal region). Interacts with DERL1.

It is found in the endoplasmic reticulum lumen. Its function is as follows. Co-chaperone for Hsp70 protein HSPA5/BiP that acts as a key repressor of the ERN1/IRE1-mediated unfolded protein response (UPR). J domain-containing co-chaperones stimulate the ATPase activity of Hsp70 proteins and are required for efficient substrate recognition by Hsp70 proteins. In the unstressed endoplasmic reticulum, interacts with the luminal region of ERN1/IRE1 and selectively recruits HSPA5/BiP: HSPA5/BiP disrupts the dimerization of the active ERN1/IRE1 luminal region, thereby inactivating ERN1/IRE1. Also involved in endoplasmic reticulum-associated degradation (ERAD) of misfolded proteins. Required for survival of B-cell progenitors and normal antibody production. In Pongo abelii (Sumatran orangutan), this protein is DnaJ homolog subfamily B member 9.